Reading from the N-terminus, the 366-residue chain is MKGFVASVVLLACGALAADIVEPEDCTSFPCMIFEDNFDYLDNDIWEHEITMSGGGNWEFQAYVNNRSISYTRDSTLFIKPDLTSNWKGEDFLSSGTLDLWGMNGRGDVCTGNSYYGCSRVGSSSNIINPVTSARLRTMSNFAFRYGRLEVRAKMPRGDWLWPAIWMLPRNWPYGLWPASGEIDILESRGNDDFGTLGNQYGGTTLHWGPFWPYNFFEKTHAEYSANTGSFADDFHVWRLDWTKDNMEFYVDDVLQLTVDPGTSFWDFAGMGPFFDNPWAAGAKMAPFDQKFYLILNVAVGGTNGFFPDGIASKPWSNLSPTAFLDFWNARDEWLPSWKAGEDRISEGAAMQVDYVRVWKMESTEQ.

The signal sequence occupies residues 1-17 (MKGFVASVVLLACGALA). One can recognise a GH16 domain in the interval 18 to 364 (ADIVEPEDCT…YVRVWKMEST (347 aa)). Residue N66 is glycosylated (N-linked (GlcNAc...) asparagine).

This sequence belongs to the glycosyl hydrolase 16 family. In terms of tissue distribution, constitutively expressed in hemocytes.

It localises to the secreted. Functionally, binds to beta-1,3-glucan. May play a role in recognition of microorganisms and in activation of the prophenoloxidase cascade. The protein is Beta-1,3-glucan-binding protein of Penaeus monodon (Giant tiger prawn).